Consider the following 261-residue polypeptide: GTP cyclohydrolase FolE2 (261 aa).

Belongs to the GTP cyclohydrolase IV family.

It carries out the reaction GTP + H2O = 7,8-dihydroneopterin 3'-triphosphate + formate + H(+). The protein operates within cofactor biosynthesis; 7,8-dihydroneopterin triphosphate biosynthesis; 7,8-dihydroneopterin triphosphate from GTP: step 1/1. Functionally, converts GTP to 7,8-dihydroneopterin triphosphate. This chain is GTP cyclohydrolase FolE2, found in Fervidobacterium nodosum (strain ATCC 35602 / DSM 5306 / Rt17-B1).